The following is a 406-amino-acid chain: Kelch domain-containing protein 2 (406 aa).

Kelch repeat units follow at residues 31-85 (ERSG…NTEG), 92-136 (SGSC…ERID), 148-207 (LGVW…AWSQ), 221-259 (HACA…NELI), 271-311 (HSLT…IQFN), and 322-359 (HTAC…IFSV).

Component of a CRL2(KLHDC2) E3 ubiquitin-protein ligase complex, also named ECS(KLHDC2) complex, composed of CUL2, Elongin BC (ELOB and ELOC), RBX1 and substrate-specific adapter KLHDC2. May form oligomers as a KLHDC2-ELOB-ELOC complex; this interaction is autoinhibitory for the E3 ligase complex as the substrate-binding site of KLHDC2 is blocked in the oligomer. Interacts with CREB3; interaction is direct and specific as it does not interact with CREB1, ATF4, ATF6, JUN, FOS, CEBPA or herpes simplex virus transactivator VP16. In terms of processing, autoubiquitinated by the CRL2(KLHDC2) E3 ligase complex.

The protein localises to the nucleus. It participates in protein modification; protein ubiquitination. Substrate-recognition component of a Cul2-RING (CRL2) E3 ubiquitin-protein ligase complex of the DesCEND (destruction via C-end degrons) pathway, which recognizes a C-degron located at the extreme C terminus of target proteins, leading to their ubiquitination and degradation. The C-degron recognized by the DesCEND pathway is usually a motif of less than ten residues and can be present in full-length proteins, truncated proteins or proteolytically cleaved forms. The CRL2(KLHDC2) complex specifically recognizes proteins with a diglycine (Gly-Gly) at the C-terminus, leading to their ubiquitination and degradation. The CRL2(KLHDC2) complex mediates ubiquitination and degradation of truncated SELENOK and SELENOS selenoproteins produced by failed UGA/Sec decoding, which end with a diglycine. The CRL2(KLHDC2) complex also recognizes proteolytically cleaved proteins ending with Gly-Gly, such as the N-terminal fragment of USP1, leading to their degradation. May also act as an indirect repressor of CREB3-mediated transcription by interfering with CREB3-DNA-binding. The polypeptide is Kelch domain-containing protein 2 (Rattus norvegicus (Rat)).